Here is a 484-residue protein sequence, read N- to C-terminus: Poly(A) RNA polymerase GLD2 (484 aa).

Phosphoserine occurs at positions 62 and 69. A Nuclear localization signal motif is present at residues 76 to 92 (KRISDEKAFRLDGKRQR). The residue at position 95 (Ser95) is a Phosphoserine. 2 residues coordinate Mg(2+): Asp213 and Asp215. The PAP-associated domain maps to 386–440 (SLGDLLLGFLKYYATEFDWNTQMISVREAKAIPRPDDMEWRNKYICVEEPFDGTN).

It belongs to the DNA polymerase type-B-like family. GLD2 subfamily. As to quaternary structure, interacts with CPEB1, CPEB2, CPSF1 and PABPC1. Interacts with QKI isoform QKI7; promoting recruitment to miRNA miR-122 and miR-122 stabilization. Requires Mg(2+) as cofactor. It depends on Mn(2+) as a cofactor.

It localises to the cytoplasm. It is found in the nucleus. It catalyses the reaction RNA(n) + ATP = RNA(n)-3'-adenine ribonucleotide + diphosphate. Its function is as follows. Cytoplasmic poly(A) RNA polymerase that adds successive AMP monomers to the 3'-end of specific RNAs, forming a poly(A) tail. In contrast to the canonical nuclear poly(A) RNA polymerase, it only adds poly(A) to selected cytoplasmic mRNAs. Does not play a role in replication-dependent histone mRNA degradation. Adds a single nucleotide to the 3' end of specific miRNAs, monoadenylation stabilizes and prolongs the activity of some but not all miRNAs. The protein is Poly(A) RNA polymerase GLD2 of Rattus norvegicus (Rat).